The sequence spans 262 residues: tRNA U34 carboxymethyltransferase (262 aa).

Residues Lys25, Trp39, Lys44, Gly63, Val114–Glu115, Tyr135, and Arg250 contribute to the carboxy-S-adenosyl-L-methionine site.

This sequence belongs to the class I-like SAM-binding methyltransferase superfamily. CmoB family. Homotetramer.

It carries out the reaction carboxy-S-adenosyl-L-methionine + 5-hydroxyuridine(34) in tRNA = 5-carboxymethoxyuridine(34) in tRNA + S-adenosyl-L-homocysteine + H(+). Its function is as follows. Catalyzes carboxymethyl transfer from carboxy-S-adenosyl-L-methionine (Cx-SAM) to 5-hydroxyuridine (ho5U) to form 5-carboxymethoxyuridine (cmo5U) at position 34 in tRNAs. The polypeptide is tRNA U34 carboxymethyltransferase (Helicobacter acinonychis (strain Sheeba)).